A 305-amino-acid chain; its full sequence is UDP-3-O-acyl-N-acetylglucosamine deacetylase (305 aa).

Zn(2+) contacts are provided by H79, H238, and D242. The Proton donor role is filled by H265.

Belongs to the LpxC family. Zn(2+) serves as cofactor.

The catalysed reaction is a UDP-3-O-[(3R)-3-hydroxyacyl]-N-acetyl-alpha-D-glucosamine + H2O = a UDP-3-O-[(3R)-3-hydroxyacyl]-alpha-D-glucosamine + acetate. It participates in glycolipid biosynthesis; lipid IV(A) biosynthesis; lipid IV(A) from (3R)-3-hydroxytetradecanoyl-[acyl-carrier-protein] and UDP-N-acetyl-alpha-D-glucosamine: step 2/6. Catalyzes the hydrolysis of UDP-3-O-myristoyl-N-acetylglucosamine to form UDP-3-O-myristoylglucosamine and acetate, the committed step in lipid A biosynthesis. This Citrobacter koseri (strain ATCC BAA-895 / CDC 4225-83 / SGSC4696) protein is UDP-3-O-acyl-N-acetylglucosamine deacetylase.